The primary structure comprises 330 residues: Thiosulfate transporter TsuA (330 aa).

At 1–2 (MI) the chain is on the periplasmic side. The helical transmembrane segment at 3 to 18 (WTGLLVGFLFGIVLQR) threads the bilayer. The Cytoplasmic segment spans residues 19–36 (GRICFNSAFRDVLLFKDN). The helical transmembrane segment at 37–59 (YLFKLAVFTLALEMILFVLLSQV) threads the bilayer. Residues 60-70 (GLMQMNPKPLN) are Periplasmic-facing. Residues 71-87 (LVGNIIGGFVFGLGMVL) form a helical membrane-spanning segment. At 88–102 (AGGCASGVTYRVGEG) the chain is on the cytoplasmic side. A helical transmembrane segment spans residues 103–121 (LTTAWFAALFYGLGAYATK). At 122-162 (SGAFSWWLSWVGQFKSPLSVEESAYYVKGAGPTISSVLGLN) the chain is on the periplasmic side. Residues 163-180 (PWIPALVIAALFILWAFG) form a helical membrane-spanning segment. Topologically, residues 181–189 (TKTTSRETK) are cytoplasmic. The helical transmembrane segment at 190–211 (FNWKIASVCLALVAGLGFITST) threads the bilayer. The Periplasmic portion of the chain corresponds to 212 to 239 (LSGRKYGLGITGGWINLFQGFLTNSPLN). A helical transmembrane segment spans residues 240–258 (WEGLEIVGIILGAGVAAAV). Residues 259-269 (AGEFKLRMPKN) are Cytoplasmic-facing. A helical membrane pass occupies residues 270 to 289 (PVTYLQVGIGGLLMGIGAVT). Over 290–306 (AGGCNIGHFLTGVPQLA) the chain is Periplasmic. The chain crosses the membrane as a helical span at residues 307-326 (LSSWLASIFFILGNWTMAWI). Residues 327-330 (LFRR) are Cytoplasmic-facing.

It belongs to the TsuA/YedE (TC 9.B.102) family.

It is found in the cell inner membrane. It catalyses the reaction thiosulfate(in) = thiosulfate(out). Its function is as follows. Mediates thiosulfate uptake. The sequence is that of Thiosulfate transporter TsuA from Spirochaeta thermophila (strain ATCC 700085 / DSM 6578 / Z-1203).